The primary structure comprises 962 residues: MTRTEILSNGHAEPASNGMVQYPFDNVVDALRAAANTTEGIIAYQTNNSGSETTPAQHISYKELLRTAEANAALLQSKHLTTPKQPVVVHSDNAVDSMIWYWSVLLTGAIPTMTGPGMFSQDAVERKKHLLHLHRTLDAPLCLTRRALMGPFNENAGLLQCLAFEDLSPSPDGSNASLPPSINPSPMDVAALMLTSGSSGTAKAVPITHQQVLAALRGKTAVAQLSHPTSPFLSWVHMDHVANLVHCHLFAIVAGVSQVQVPAANVLVDPMQLLNLLSRHRVSRTFAPNFLFAKLRRQFDAGRTDSLDADLNLAALYLDTGGEANVIDVCAGLQPILARYGAPADVFKPSFGMTETCAGCIFNSHCPSYDQARLHEFASLGTPMPGVRMRISRLDGSGEAAPGERGHLEITGEAIFHGYYNNPTATADAFTADGWFRTGDLAYIDAGGHLHLDGRTKEMVNINGVKYLPHELDAALEQAEIPGATPTYFCCFGTRTAAMDTEVVAVLYLPAYDEADDAARFDAQSSIIRLISMYTHSRPRVVPLRREDMPKTTLGKLSRAKLQAALEAGQFAAYEAANEAAIRRHRDTMRGEPASAEEATILSIIREQLEIPEADDFGVTDSILSMGATSMDLVAIMQRVNRQLQLRKTLALTDMLNYATARGLCQRIAATSGTGRKHVYDPVVVLQPHGRKTPLWLVHPGVGEVLVFVNLAHHITDRPVYAFRAKGFNAAEGETPFTSLEEVFETYKAAMKARQPQGPYAIAGYSFGGMVAFEIAKRLEAEGDEVRYCGSWNLPPHIKWRMKQLLWDECIIHLFYFVDLMDEETAYTHKPKLCELERQGRRLEAVRYLRQHSNPARWDELGLSEEYYLLWVNLASNMQGMATEYEPSGNVKHLDVFVADPLTHVARTREEWVNGLLAAWKDFVREGVRYHHVEGAHYTMLKPEYVANFAKTLRTVLRERGV.

Residues 34-462 (AANTTEGIIA…DGRTKEMVNI (429 aa)) form an adenylation (A) domain region. In terms of domain architecture, Carrier spans 595–672 (SAEEATILSI…GLCQRIAATS (78 aa)). At Ser-630 the chain carries O-(pantetheine 4'-phosphoryl)serine. Positions 694-951 (PLWLVHPGVG…KPEYVANFAK (258 aa)) are thioesterase (TE) domain.

This sequence belongs to the NRP synthetase family.

It functions in the pathway secondary metabolite biosynthesis. Functionally, nonribosomal peptide synthetase; part of the gene cluster that mediates the biosynthesis of asterriquinone CT5, a natural product that displays potential biological activities including antitumor and insulin mimic activities. The nonribosomal peptide synthetase atqA is responsible for the production of the benzoquinone derivative didemethylasterriquinone D (DDAQ D), via condensation of 2 indole pyruvic acid (IPA) molecules. The symmetric connectivity of the 2 IPA molecules is thought to arise by head-to-tail dual Claisen condensations catalyzed by the TE domain of atqA. DDAQ D represents the core structure of asterriquinones and is further modified by yet unidentified tailoring enzymes to lead to the production of asterriquinone CT5. In Aspergillus terreus (strain NIH 2624 / FGSC A1156), this protein is Nonribosomal peptide synthetase atqA.